We begin with the raw amino-acid sequence, 331 residues long: 6-phosphogluconolactonase (331 aa).

At lysine 287 the chain carries N6-acetyllysine.

Belongs to the cycloisomerase 2 family.

It catalyses the reaction 6-phospho-D-glucono-1,5-lactone + H2O = 6-phospho-D-gluconate + H(+). Its pathway is carbohydrate degradation; pentose phosphate pathway; D-ribulose 5-phosphate from D-glucose 6-phosphate (oxidative stage): step 2/3. In terms of biological role, catalyzes the hydrolysis of 6-phosphogluconolactone to 6-phosphogluconate. In Shigella sonnei (strain Ss046), this protein is 6-phosphogluconolactonase.